We begin with the raw amino-acid sequence, 298 residues long: 4-hydroxy-tetrahydrodipicolinate synthase (298 aa).

Position 45 (threonine 45) interacts with pyruvate. Residue tyrosine 133 is the Proton donor/acceptor of the active site. Lysine 161 serves as the catalytic Schiff-base intermediate with substrate. Isoleucine 203 serves as a coordination point for pyruvate.

Belongs to the DapA family. In terms of assembly, homotetramer; dimer of dimers.

It is found in the cytoplasm. It catalyses the reaction L-aspartate 4-semialdehyde + pyruvate = (2S,4S)-4-hydroxy-2,3,4,5-tetrahydrodipicolinate + H2O + H(+). The protein operates within amino-acid biosynthesis; L-lysine biosynthesis via DAP pathway; (S)-tetrahydrodipicolinate from L-aspartate: step 3/4. Its function is as follows. Catalyzes the condensation of (S)-aspartate-beta-semialdehyde [(S)-ASA] and pyruvate to 4-hydroxy-tetrahydrodipicolinate (HTPA). The protein is 4-hydroxy-tetrahydrodipicolinate synthase of Wigglesworthia glossinidia brevipalpis.